The chain runs to 560 residues: DNA ligase B (560 aa).

The active-site N6-AMP-lysine intermediate is K124.

It belongs to the NAD-dependent DNA ligase family. LigB subfamily.

It catalyses the reaction NAD(+) + (deoxyribonucleotide)n-3'-hydroxyl + 5'-phospho-(deoxyribonucleotide)m = (deoxyribonucleotide)n+m + AMP + beta-nicotinamide D-nucleotide.. Functionally, catalyzes the formation of phosphodiester linkages between 5'-phosphoryl and 3'-hydroxyl groups in double-stranded DNA using NAD as a coenzyme and as the energy source for the reaction. This is DNA ligase B from Escherichia coli O139:H28 (strain E24377A / ETEC).